Consider the following 150-residue polypeptide: Small ribosomal subunit protein uS13 (150 aa).

The protein belongs to the universal ribosomal protein uS13 family. Part of the 30S ribosomal subunit. Forms a loose heterodimer with protein S19. Forms two bridges to the 50S subunit in the 70S ribosome.

Located at the top of the head of the 30S subunit, it contacts several helices of the 16S rRNA. In the 70S ribosome it contacts the 23S rRNA (bridge B1a) and protein L5 of the 50S subunit (bridge B1b), connecting the 2 subunits; these bridges are implicated in subunit movement. The chain is Small ribosomal subunit protein uS13 from Methanocorpusculum labreanum (strain ATCC 43576 / DSM 4855 / Z).